A 332-amino-acid polypeptide reads, in one-letter code: Galactinol synthase 7 (332 aa).

The active site involves Lys101. Positions 117, 119, and 255 each coordinate Mn(2+).

Belongs to the glycosyltransferase 8 family. Galactosyltransferase subfamily. A divalent metal cation serves as cofactor.

It localises to the cytoplasm. The enzyme catalyses myo-inositol + UDP-alpha-D-galactose = alpha-D-galactosyl-(1-&gt;3)-1D-myo-inositol + UDP + H(+). Its function is as follows. Galactinol synthase involved in the biosynthesis of raffinose family oligosaccharides (RFOs) that function as osmoprotectants. May promote plant stress tolerance. This Arabidopsis thaliana (Mouse-ear cress) protein is Galactinol synthase 7 (GOLS7).